The primary structure comprises 345 residues: tRNA-specific 2-thiouridylase MnmA 1 (345 aa).

Residues 9–16 and Leu-35 each bind ATP; that span reads GMSGGIDS. Cys-96 acts as the Nucleophile in catalysis. Cys-96 and Cys-191 form a disulfide bridge. Gly-120 contacts ATP. The interaction with tRNA stretch occupies residues 138 to 140; that stretch reads KDQ. The active-site Cysteine persulfide intermediate is Cys-191. The interval 293–294 is interaction with tRNA; it reads RY.

Belongs to the MnmA/TRMU family.

The protein resides in the cytoplasm. It carries out the reaction S-sulfanyl-L-cysteinyl-[protein] + uridine(34) in tRNA + AH2 + ATP = 2-thiouridine(34) in tRNA + L-cysteinyl-[protein] + A + AMP + diphosphate + H(+). Functionally, catalyzes the 2-thiolation of uridine at the wobble position (U34) of tRNA, leading to the formation of s(2)U34. The sequence is that of tRNA-specific 2-thiouridylase MnmA 1 from Aliarcobacter butzleri (strain RM4018) (Arcobacter butzleri).